The chain runs to 295 residues: Sulfotransferase 1A1 (295 aa).

48–53 (KSGTTW) contacts 3'-phosphoadenylyl sulfate. 106–108 (KTH) lines the substrate pocket. His-108 serves as the catalytic Proton acceptor. 3'-phosphoadenylyl sulfate-binding positions include Arg-130, Ser-138, Tyr-193, 227 to 232 (TSFKEM), and 255 to 259 (FMRKG). Ser-138 is modified (phosphoserine).

The protein belongs to the sulfotransferase 1 family. As to quaternary structure, homodimer. In terms of tissue distribution, ubiquitously expressed in canine tissues with highest expression in male and female liver.

The protein resides in the cytoplasm. The enzyme catalyses a phenol + 3'-phosphoadenylyl sulfate = an aryl sulfate + adenosine 3',5'-bisphosphate + H(+). It carries out the reaction 17beta-estradiol + 3'-phosphoadenylyl sulfate = 17beta-estradiol 3-sulfate + adenosine 3',5'-bisphosphate + H(+). It catalyses the reaction 4-ethylphenol + 3'-phosphoadenylyl sulfate = 4-ethylphenyl sulfate + adenosine 3',5'-bisphosphate + H(+). The catalysed reaction is 4-nitrophenol + 3'-phosphoadenylyl sulfate = 4-nitrophenyl sulfate + adenosine 3',5'-bisphosphate. The enzyme catalyses dopamine + 3'-phosphoadenylyl sulfate = dopamine 3-O-sulfate + adenosine 3',5'-bisphosphate + H(+). It carries out the reaction dopamine + 3'-phosphoadenylyl sulfate = dopamine 4-O-sulfate + adenosine 3',5'-bisphosphate + H(+). It catalyses the reaction 3,3',5-triiodo-L-thyronine + 3'-phosphoadenylyl sulfate = 3,3',5-triiodo-L-thyronine sulfate + adenosine 3',5'-bisphosphate + H(+). The catalysed reaction is 3,3',5'-triiodo-L-thyronine + 3'-phosphoadenylyl sulfate = 3,3',5'-triiodo-L-thyronine sulfate + adenosine 3',5'-bisphosphate + H(+). The enzyme catalyses 3,3'-diiodo-L-thyronine + 3'-phosphoadenylyl sulfate = 3,3'-diiodo-L-thyronine sulfate + adenosine 3',5'-bisphosphate + H(+). It carries out the reaction L-thyroxine + 3'-phosphoadenylyl sulfate = L-thyroxine sulfate + adenosine 3',5'-bisphosphate + H(+). Functionally, sulfotransferase that utilizes 3'-phospho-5'-adenylyl sulfate (PAPS) as sulfonate donor to catalyze the sulfate conjugation of a wide variety of acceptor molecules bearing a hydroxyl or an amine group. Sulfonation increases the water solubility of most compounds, and therefore their renal excretion, but it can also result in bioactivation to form active metabolites. Displays broad substrate specificity for small phenolic compounds. Plays an important role in the sulfonation of endogenous molecules such as steroid hormones. Mediates also the metabolic activation of carcinogenic N-hydroxyarylamines leading to highly reactive intermediates capable of forming DNA adducts, potentially resulting in mutagenesis. May play a role in gut microbiota-host metabolic interaction. O-sulfonates 4-ethylphenol (4-EP), a dietary tyrosine-derived metabolite produced by gut bacteria. The product 4-EPS crosses the blood-brain barrier and may negatively regulate oligodendrocyte maturation and myelination, affecting the functional connectivity of different brain regions associated with the limbic system. Catalyzes the sulfate conjugation of dopamine. Catalyzes the sulfation of T4 (L-thyroxine/3,5,3',5'-tetraiodothyronine), T3 (3,5,3'-triiodothyronine), rT3 (3,3',5'-triiodothyronine) and 3,3'-T2 (3,3'-diiodothyronine), with a substrate preference of 3,3'-T2 &gt; rT3 &gt; T3 &gt; T4. The sequence is that of Sulfotransferase 1A1 (SULT1A1) from Canis lupus familiaris (Dog).